Reading from the N-terminus, the 224-residue chain is 7-cyano-7-deazaguanine synthase (224 aa).

Phenylalanine 11–leucine 21 provides a ligand contact to ATP. Cysteine 190, cysteine 199, cysteine 202, and cysteine 205 together coordinate Zn(2+).

It belongs to the QueC family. Zn(2+) is required as a cofactor.

It carries out the reaction 7-carboxy-7-deazaguanine + NH4(+) + ATP = 7-cyano-7-deazaguanine + ADP + phosphate + H2O + H(+). The protein operates within purine metabolism; 7-cyano-7-deazaguanine biosynthesis. In terms of biological role, catalyzes the ATP-dependent conversion of 7-carboxy-7-deazaguanine (CDG) to 7-cyano-7-deazaguanine (preQ(0)). The polypeptide is 7-cyano-7-deazaguanine synthase (Parabacteroides distasonis (strain ATCC 8503 / DSM 20701 / CIP 104284 / JCM 5825 / NCTC 11152)).